Reading from the N-terminus, the 261-residue chain is Cytochrome c oxidase subunit 3 (261 aa).

Residues 1–15 (MAHQAHAYHMVDPSP) lie on the Mitochondrial matrix side of the membrane. A helical transmembrane segment spans residues 16–34 (WPITGATAALLVTSGLAAW). Residues 35-40 (FHFNSM) are Mitochondrial intermembrane-facing. The helical transmembrane segment at 41 to 66 (ILILMGLTLLLLTMYQWWRDIIREST) threads the bilayer. The Mitochondrial matrix segment spans residues 67 to 72 (FQGHHT). A helical membrane pass occupies residues 73–105 (LPVQKSLRYGMILFITSEVFFFLGFFWAFYHSS). The Mitochondrial intermembrane segment spans residues 106-128 (LAPTPELGGLWPPTGITPLDPFE). The helical transmembrane segment at 129–152 (VPLLNTAVLLASGITVTWAHHSLM) threads the bilayer. Topologically, residues 153–155 (EGQ) are mitochondrial matrix. Residues 156–183 (RKEAIQSLFITVLLGLYFTALQATEYYE) form a helical membrane-spanning segment. Residues 184–190 (SPFTIAD) are Mitochondrial intermembrane-facing. A helical membrane pass occupies residues 191-223 (GAYGSTFFVATGFHGLHVIIGSTFLIVCLVRQT). Topologically, residues 224–232 (QYHFTSNHH) are mitochondrial matrix. Residues 233-256 (FGFEAAAWYWHFVDVVWLFLYVSI) form a helical membrane-spanning segment. The Mitochondrial intermembrane segment spans residues 257–261 (YWWGS).

The protein belongs to the cytochrome c oxidase subunit 3 family. In terms of assembly, component of the cytochrome c oxidase (complex IV, CIV), a multisubunit enzyme composed of 14 subunits. The complex is composed of a catalytic core of 3 subunits MT-CO1, MT-CO2 and MT-CO3, encoded in the mitochondrial DNA, and 11 supernumerary subunits COX4I, COX5A, COX5B, COX6A, COX6B, COX6C, COX7A, COX7B, COX7C, COX8 and NDUFA4, which are encoded in the nuclear genome. The complex exists as a monomer or a dimer and forms supercomplexes (SCs) in the inner mitochondrial membrane with NADH-ubiquinone oxidoreductase (complex I, CI) and ubiquinol-cytochrome c oxidoreductase (cytochrome b-c1 complex, complex III, CIII), resulting in different assemblies (supercomplex SCI(1)III(2)IV(1) and megacomplex MCI(2)III(2)IV(2)).

The protein resides in the mitochondrion inner membrane. It catalyses the reaction 4 Fe(II)-[cytochrome c] + O2 + 8 H(+)(in) = 4 Fe(III)-[cytochrome c] + 2 H2O + 4 H(+)(out). In terms of biological role, component of the cytochrome c oxidase, the last enzyme in the mitochondrial electron transport chain which drives oxidative phosphorylation. The respiratory chain contains 3 multisubunit complexes succinate dehydrogenase (complex II, CII), ubiquinol-cytochrome c oxidoreductase (cytochrome b-c1 complex, complex III, CIII) and cytochrome c oxidase (complex IV, CIV), that cooperate to transfer electrons derived from NADH and succinate to molecular oxygen, creating an electrochemical gradient over the inner membrane that drives transmembrane transport and the ATP synthase. Cytochrome c oxidase is the component of the respiratory chain that catalyzes the reduction of oxygen to water. Electrons originating from reduced cytochrome c in the intermembrane space (IMS) are transferred via the dinuclear copper A center (CU(A)) of subunit 2 and heme A of subunit 1 to the active site in subunit 1, a binuclear center (BNC) formed by heme A3 and copper B (CU(B)). The BNC reduces molecular oxygen to 2 water molecules using 4 electrons from cytochrome c in the IMS and 4 protons from the mitochondrial matrix. The chain is Cytochrome c oxidase subunit 3 (MT-CO3) from Latimeria chalumnae (Coelacanth).